The sequence spans 370 residues: 2-Hydroxyacid oxidase 1 (370 aa).

The FMN hydroxy acid dehydrogenase domain maps to 1–365 (MLPRLVCISD…DKTLVRKNPL (365 aa)). A glyoxylate-binding site is contributed by Tyr-26. FMN is bound by residues 79–81 (ATA), Ser-108, and Gln-130. Tyr-132 provides a ligand contact to glyoxylate. Thr-158 contributes to the FMN binding site. Arg-167 is a binding site for glyoxylate. At Lys-184 the chain carries N6-succinyllysine. Phosphoserine occurs at positions 194 and 230. The FMN site is built by Lys-236 and Ser-258. The glyoxylate site is built by His-260 and Arg-263. The active-site Proton acceptor is His-260. Residues 291 to 295 (DGGVR) and 314 to 315 (GR) each bind FMN. The short motif at 368–370 (SKI) is the Microbody targeting signal element.

This sequence belongs to the FMN-dependent alpha-hydroxy acid dehydrogenase family. Homotetramer. FMN is required as a cofactor. As to expression, liver.

The protein localises to the peroxisome matrix. The enzyme catalyses a (2S)-2-hydroxycarboxylate + O2 = a 2-oxocarboxylate + H2O2. It catalyses the reaction glycolate + O2 = glyoxylate + H2O2. It carries out the reaction glyoxylate + O2 + H2O = oxalate + H2O2 + H(+). The catalysed reaction is 2-hydroxyhexadecanoate + O2 = 2-oxohexadecanoate + H2O2. The enzyme catalyses 2-hydroxyoctanoate + O2 = 2-oxooctanoate + H2O2. It functions in the pathway amino-acid biosynthesis; glycine biosynthesis. Its function is as follows. Broad substrate specificity (S)-2-hydroxy-acid oxidase that preferentially oxidizes glycolate. The glyoxylate produced by the oxidation of glycolate can then be utilized by alanine-glyoxylate aminotransferase for the peroxisomal synthesis of glycine; this pathway appears to be an important step for the detoxification of glyoxylate which, if allowed to accumulate, may be metabolized to oxalate with formation of kidney stones. Can also catalyze the oxidation glyoxylate, and long chain hydroxyacids such as 2-hydroxyhexadecanoate and 2-hydroxyoctanoate. Active in vitro with the artificial electron acceptor 2,6-dichlorophenolindophenol (DCIP), but O2 is believed to be the physiological electron acceptor, leading to the production of H2O2. In Mus musculus (Mouse), this protein is 2-Hydroxyacid oxidase 1.